We begin with the raw amino-acid sequence, 212 residues long: Cytidylate kinase (212 aa).

Residue 7–15 (GPAASGKGT) participates in ATP binding.

This sequence belongs to the cytidylate kinase family. Type 1 subfamily.

Its subcellular location is the cytoplasm. It catalyses the reaction CMP + ATP = CDP + ADP. The catalysed reaction is dCMP + ATP = dCDP + ADP. This is Cytidylate kinase from Bradyrhizobium sp. (strain ORS 278).